A 329-amino-acid chain; its full sequence is MTQLFYDTDADLSLLNNKTIAIIGYGSQGHAHALNLKDSGMDVIVGLYKGSKSESKAVSDGLQVFSVSEACEKADWIMILLPDEFQKDVYLKEIEPNLKEGKILSFAHGFNIRFGLIKPPSFVDVVMIAPKGPGHTVRWEYQNGQGVPALFAVEQDSSGSARSLAMAYAKGIGGTRAGILETNFKEETETDLFGEQAVLCGGLSELVKSGFETLVEAGYQPELAYFECLHEVKLIVDLMVKGGLSQMRDSISNTAEYGDYVSGKRLINSDTKKEMQKILKDIQDGTFAKNFVEECDKNKPLMTKLREENSKHEIEKVGKGLRSMFSWLK.

Residues threonine 2 to threonine 182 form the KARI N-terminal Rossmann domain. NADP(+)-binding positions include tyrosine 25–glutamine 28, serine 51, serine 53, and aspartate 83–glutamine 86. The active site involves histidine 108. Residue glycine 134 participates in NADP(+) binding. A KARI C-terminal knotted domain is found at asparagine 183–leucine 328. The Mg(2+) site is built by aspartate 191, glutamate 195, glutamate 227, and glutamate 231. Position 252 (serine 252) interacts with substrate.

Belongs to the ketol-acid reductoisomerase family. Mg(2+) is required as a cofactor.

The enzyme catalyses (2R)-2,3-dihydroxy-3-methylbutanoate + NADP(+) = (2S)-2-acetolactate + NADPH + H(+). It carries out the reaction (2R,3R)-2,3-dihydroxy-3-methylpentanoate + NADP(+) = (S)-2-ethyl-2-hydroxy-3-oxobutanoate + NADPH + H(+). Its pathway is amino-acid biosynthesis; L-isoleucine biosynthesis; L-isoleucine from 2-oxobutanoate: step 2/4. The protein operates within amino-acid biosynthesis; L-valine biosynthesis; L-valine from pyruvate: step 2/4. Its function is as follows. Involved in the biosynthesis of branched-chain amino acids (BCAA). Catalyzes an alkyl-migration followed by a ketol-acid reduction of (S)-2-acetolactate (S2AL) to yield (R)-2,3-dihydroxy-isovalerate. In the isomerase reaction, S2AL is rearranged via a Mg-dependent methyl migration to produce 3-hydroxy-3-methyl-2-ketobutyrate (HMKB). In the reductase reaction, this 2-ketoacid undergoes a metal-dependent reduction by NADPH to yield (R)-2,3-dihydroxy-isovalerate. The polypeptide is Ketol-acid reductoisomerase (NADP(+)) (Prochlorococcus marinus (strain MIT 9215)).